Here is a 348-residue protein sequence, read N- to C-terminus: Protein RecA (348 aa).

66 to 73 contributes to the ATP binding site; the sequence is GPESSGKT.

This sequence belongs to the RecA family.

It is found in the cytoplasm. Can catalyze the hydrolysis of ATP in the presence of single-stranded DNA, the ATP-dependent uptake of single-stranded DNA by duplex DNA, and the ATP-dependent hybridization of homologous single-stranded DNAs. It interacts with LexA causing its activation and leading to its autocatalytic cleavage. The polypeptide is Protein RecA (Neisseria meningitidis serogroup A / serotype 4A (strain DSM 15465 / Z2491)).